Consider the following 333-residue polypeptide: Holliday junction branch migration complex subunit RuvB (333 aa).

Residues 1–182 (MEERLVSGDV…FGVISRLEYY (182 aa)) are large ATPase domain (RuvB-L). Residues leucine 21, arginine 22, glycine 63, lysine 66, threonine 67, threonine 68, 129–131 (EDY), arginine 172, tyrosine 182, and arginine 219 contribute to the ATP site. Threonine 67 serves as a coordination point for Mg(2+). The tract at residues 183-253 (TTEHLTQIVM…LAKEALELLQ (71 aa)) is small ATPAse domain (RuvB-S). Residues 256 to 333 (RLGLDHIDHK…EHFGMEVPKQ (78 aa)) form a head domain (RuvB-H) region. Positions 311 and 316 each coordinate DNA.

This sequence belongs to the RuvB family. Homohexamer. Forms an RuvA(8)-RuvB(12)-Holliday junction (HJ) complex. HJ DNA is sandwiched between 2 RuvA tetramers; dsDNA enters through RuvA and exits via RuvB. An RuvB hexamer assembles on each DNA strand where it exits the tetramer. Each RuvB hexamer is contacted by two RuvA subunits (via domain III) on 2 adjacent RuvB subunits; this complex drives branch migration. In the full resolvosome a probable DNA-RuvA(4)-RuvB(12)-RuvC(2) complex forms which resolves the HJ.

The protein resides in the cytoplasm. The catalysed reaction is ATP + H2O = ADP + phosphate + H(+). The RuvA-RuvB-RuvC complex processes Holliday junction (HJ) DNA during genetic recombination and DNA repair, while the RuvA-RuvB complex plays an important role in the rescue of blocked DNA replication forks via replication fork reversal (RFR). RuvA specifically binds to HJ cruciform DNA, conferring on it an open structure. The RuvB hexamer acts as an ATP-dependent pump, pulling dsDNA into and through the RuvAB complex. RuvB forms 2 homohexamers on either side of HJ DNA bound by 1 or 2 RuvA tetramers; 4 subunits per hexamer contact DNA at a time. Coordinated motions by a converter formed by DNA-disengaged RuvB subunits stimulates ATP hydrolysis and nucleotide exchange. Immobilization of the converter enables RuvB to convert the ATP-contained energy into a lever motion, pulling 2 nucleotides of DNA out of the RuvA tetramer per ATP hydrolyzed, thus driving DNA branch migration. The RuvB motors rotate together with the DNA substrate, which together with the progressing nucleotide cycle form the mechanistic basis for DNA recombination by continuous HJ branch migration. Branch migration allows RuvC to scan DNA until it finds its consensus sequence, where it cleaves and resolves cruciform DNA. The protein is Holliday junction branch migration complex subunit RuvB of Geobacillus sp. (strain WCH70).